The following is a 447-amino-acid chain: UPF0597 protein Amet_4665 (447 aa).

Belongs to the UPF0597 family.

The sequence is that of UPF0597 protein Amet_4665 from Alkaliphilus metalliredigens (strain QYMF).